Consider the following 693-residue polypeptide: Elongation factor G (693 aa).

Positions 8-282 (EKTRNIGIMA…AVIDYLPSPL (275 aa)) constitute a tr-type G domain. Residues 17–24 (AHVDAGKT), 81–85 (DTPGH), and 135–138 (NKMD) contribute to the GTP site.

It belongs to the TRAFAC class translation factor GTPase superfamily. Classic translation factor GTPase family. EF-G/EF-2 subfamily.

It localises to the cytoplasm. Functionally, catalyzes the GTP-dependent ribosomal translocation step during translation elongation. During this step, the ribosome changes from the pre-translocational (PRE) to the post-translocational (POST) state as the newly formed A-site-bound peptidyl-tRNA and P-site-bound deacylated tRNA move to the P and E sites, respectively. Catalyzes the coordinated movement of the two tRNA molecules, the mRNA and conformational changes in the ribosome. This Streptococcus pneumoniae (strain ATCC 700669 / Spain 23F-1) protein is Elongation factor G.